The chain runs to 1409 residues: Inositol hexakisphosphate and diphosphoinositol-pentakisphosphate kinase 1 (1409 aa).

A substrate-binding site is contributed by 64–65 (KK). ATP is bound by residues R145, K198, H205, R224, 248–251 (EEFM), and 257–259 (DVK). 224–225 (RK) contributes to the substrate binding site. Substrate contacts are provided by K259 and R273. Residues S275, D320, and 332 to 334 (DVN) contribute to the ATP site. 337–340 (SFVK) provides a ligand contact to substrate. The segment at 382–453 (PTTSGTMMEL…VLDITRLLLA (72 aa)) is polyphosphoinositide-binding domain. Residues 891–996 (GVEEEGSAPA…PTEMKQSGLG (106 aa)) form a disordered region. 2 positions are modified to phosphoserine: S920 and S963. A compositionally biased stretch (polar residues) spans 981 to 996 (FSSSRPPTEMKQSGLG). Phosphoserine is present on residues S1013 and S1049. Residues 1110-1119 (MHSSQASDNP) show a composition bias toward polar residues. The disordered stretch occupies residues 1110 to 1183 (MHSSQASDNP…PSLNSHVAEE (74 aa)). Residues S1121 and S1128 each carry the phosphoserine modification. Over residues 1144-1162 (SSGPSSTVSSAGPSSPTTV) the composition is skewed to low complexity. The segment covering 1163–1178 (DGNSQFGFSDQPSLNS) has biased composition (polar residues).

This sequence belongs to the histidine acid phosphatase family. VIP1 subfamily.

The protein resides in the cytoplasm. Its subcellular location is the cytosol. The protein localises to the cell membrane. It carries out the reaction 1D-myo-inositol hexakisphosphate + ATP = 1-diphospho-1D-myo-inositol 2,3,4,5,6-pentakisphosphate + ADP. The catalysed reaction is 5-diphospho-1D-myo-inositol 1,2,3,4,6-pentakisphosphate + ATP + H(+) = 1,5-bis(diphospho)-1D-myo-inositol 2,3,4,6-tetrakisphosphate + ADP. In terms of biological role, bifunctional inositol kinase that acts in concert with the IP6K kinases IP6K1, IP6K2 and IP6K3 to synthesize the diphosphate group-containing inositol pyrophosphates diphosphoinositol pentakisphosphate, PP-InsP5, and bis-diphosphoinositol tetrakisphosphate, (PP)2-InsP4. PP-InsP5 and (PP)2-InsP4, also respectively called InsP7 and InsP8, regulate a variety of cellular processes, including apoptosis, vesicle trafficking, cytoskeletal dynamics, exocytosis, insulin signaling and neutrophil activation. Phosphorylates inositol hexakisphosphate (InsP6) at position 1 to produce PP-InsP5 which is in turn phosphorylated by IP6Ks to produce (PP)2-InsP4. Alternatively, phosphorylates PP-InsP5 at position 1, produced by IP6Ks from InsP6, to produce (PP)2-InsP4. Activated when cells are exposed to hyperosmotic stress. This Pongo abelii (Sumatran orangutan) protein is Inositol hexakisphosphate and diphosphoinositol-pentakisphosphate kinase 1.